A 906-amino-acid chain; its full sequence is Gamma-tubulin complex component 3 homolog (906 aa).

The segment covering 208–229 (GQQPSQQSTTTKGLPNTVSRNV) has biased composition (polar residues). Residues 208-242 (GQQPSQQSTTTKGLPNTVSRNVPRTRREGDSSGSV) form a disordered region.

Belongs to the TUBGCP family. Interacts with gamma-tubulin.

It localises to the cytoplasm. Its subcellular location is the cytoskeleton. The protein localises to the microtubule organizing center. The protein resides in the centrosome. Its function is as follows. Necessary for the recruitment of gamma-tubulin to the centrosome and for the formation of a functional centrosome. This chain is Gamma-tubulin complex component 3 homolog (tubgcp3), found in Xenopus laevis (African clawed frog).